The chain runs to 365 residues: Phosphoserine aminotransferase (365 aa).

An L-glutamate-binding site is contributed by R42. Residues 76–77 (GR), W102, T156, D175, and Q198 each bind pyridoxal 5'-phosphate. K199 carries the N6-(pyridoxal phosphate)lysine modification. 240-241 (NT) is a pyridoxal 5'-phosphate binding site.

Belongs to the class-V pyridoxal-phosphate-dependent aminotransferase family. SerC subfamily. In terms of assembly, homodimer. It depends on pyridoxal 5'-phosphate as a cofactor.

The protein localises to the cytoplasm. The enzyme catalyses O-phospho-L-serine + 2-oxoglutarate = 3-phosphooxypyruvate + L-glutamate. It carries out the reaction 4-(phosphooxy)-L-threonine + 2-oxoglutarate = (R)-3-hydroxy-2-oxo-4-phosphooxybutanoate + L-glutamate. Its pathway is amino-acid biosynthesis; L-serine biosynthesis; L-serine from 3-phospho-D-glycerate: step 2/3. The protein operates within cofactor biosynthesis; pyridoxine 5'-phosphate biosynthesis; pyridoxine 5'-phosphate from D-erythrose 4-phosphate: step 3/5. In terms of biological role, catalyzes the reversible conversion of 3-phosphohydroxypyruvate to phosphoserine and of 3-hydroxy-2-oxo-4-phosphonooxybutanoate to phosphohydroxythreonine. In Shewanella oneidensis (strain ATCC 700550 / JCM 31522 / CIP 106686 / LMG 19005 / NCIMB 14063 / MR-1), this protein is Phosphoserine aminotransferase.